Here is a 70-residue protein sequence, read N- to C-terminus: Small ribosomal subunit protein bS18 (70 aa).

Belongs to the bacterial ribosomal protein bS18 family. Part of the 30S ribosomal subunit. Forms a tight heterodimer with protein bS6.

In terms of biological role, binds as a heterodimer with protein bS6 to the central domain of the 16S rRNA, where it helps stabilize the platform of the 30S subunit. This is Small ribosomal subunit protein bS18 from Salinibacter ruber (strain DSM 13855 / M31).